Here is a 343-residue protein sequence, read N- to C-terminus: 4-hydroxy-2-oxovalerate aldolase (343 aa).

Positions 4 to 254 (PRLTDTTLRD…NPGLDVFSLM (251 aa)) constitute a Pyruvate carboxyltransferase domain. 12–13 (RD) lines the substrate pocket. Asp13 contacts Mn(2+). His16 acts as the Proton acceptor in catalysis. Residues Ser166 and His193 each contribute to the substrate site. Residues His193 and His195 each contribute to the Mn(2+) site. Residue Tyr284 coordinates substrate.

This sequence belongs to the 4-hydroxy-2-oxovalerate aldolase family.

It carries out the reaction (S)-4-hydroxy-2-oxopentanoate = acetaldehyde + pyruvate. This is 4-hydroxy-2-oxovalerate aldolase from Chloroflexus aurantiacus (strain ATCC 29364 / DSM 637 / Y-400-fl).